Consider the following 649-residue polypeptide: Macrolide export ATP-binding/permease protein MacB 1 (649 aa).

One can recognise an ABC transporter domain in the interval 5–243 (LELEGIRRSY…AAAELMSLTP (239 aa)). ATP is bound at residue 41–48 (GASGSGKS). 5 consecutive transmembrane segments (helical) span residues 274–294 (ALTMLGIIIGIASVVSILVVG), 420–440 (VVGQVILVGNMPATVVGVVAE), 524–544 (LFLTLVAVISLVVGGIGVMNI), 578–598 (VLVCLIGGALGISLSFAIGLI), and 608–628 (IAFPPMALFSAFLCSTVIGVV).

Belongs to the ABC transporter superfamily. Macrolide exporter (TC 3.A.1.122) family. Homodimer. Part of the tripartite efflux system MacAB-TolC, which is composed of an inner membrane transporter, MacB, a periplasmic membrane fusion protein, MacA, and an outer membrane component, TolC. The complex forms a large protein conduit and can translocate molecules across both the inner and outer membranes. Interacts with MacA.

It localises to the cell inner membrane. Its function is as follows. Part of the tripartite efflux system MacAB-TolC. MacB is a non-canonical ABC transporter that contains transmembrane domains (TMD), which form a pore in the inner membrane, and an ATP-binding domain (NBD), which is responsible for energy generation. Confers resistance against macrolides. This is Macrolide export ATP-binding/permease protein MacB 1 from Yersinia pestis bv. Antiqua (strain Antiqua).